The chain runs to 208 residues: Large ribosomal subunit protein uL3 (208 aa).

It belongs to the universal ribosomal protein uL3 family. Part of the 50S ribosomal subunit. Forms a cluster with proteins L14 and L19.

One of the primary rRNA binding proteins, it binds directly near the 3'-end of the 23S rRNA, where it nucleates assembly of the 50S subunit. This is Large ribosomal subunit protein uL3 from Salinibacter ruber (strain DSM 13855 / M31).